The primary structure comprises 1417 residues: Cytoadherence-linked asexual protein 3.1 (1417 aa).

The N-terminal stretch at 1–24 is a signal peptide; the sequence is MVSFFKTPIFILIIFLYLNEKVIC. Cystine bridges form between Cys333/Cys361, Cys407/Cys413, Cys517/Cys545, and Cys521/Cys542. Residues 1204 to 1224 form a helical membrane-spanning segment; the sequence is LVNGFMYAFCFFAISQMYAYF. A disordered region spans residues 1383 to 1417; the sequence is TYIDTEKMNEADSADSDDEKDSDTPDDELMISRFH. Positions 1394–1411 are enriched in acidic residues; sequence DSADSDDEKDSDTPDDEL.

Self-associates. Component of the RhopH complex. RhopH complex is at least composed of CLAG3.1/CLAG3.2, RhopH2 and RhopH3 with a 1:1:1 subunit stoichiometry. CLAG3.1/CLAG3.2 mediates subunit association through independent contacts with RhopH2 and RhopH3, which do not directly interact with one another. Interacts with RhopH2. Interacts with RhopH3.

Its subcellular location is the host cell membrane. It localises to the host cytoplasm. It is found in the cytoplasmic vesicle. The protein localises to the secretory vesicle. The protein resides in the rhoptry. In terms of biological role, participates in the formation of new permeability pathways in Plasmodium-infected erythrocytes enabling the uptake of nutrients from the blood plasma. The protein is Cytoadherence-linked asexual protein 3.1 of Plasmodium falciparum (isolate 3D7).